The following is an 847-amino-acid chain: DNA mismatch repair protein MutS (847 aa).

602–609 (GPNMSGKS) lines the ATP pocket.

Belongs to the DNA mismatch repair MutS family.

Functionally, this protein is involved in the repair of mismatches in DNA. It is possible that it carries out the mismatch recognition step. This protein has a weak ATPase activity. This chain is DNA mismatch repair protein MutS, found in Streptococcus uberis (strain ATCC BAA-854 / 0140J).